Here is a 438-residue protein sequence, read N- to C-terminus: Dihydroorotase (438 aa).

Zn(2+)-binding residues include histidine 58 and histidine 60. Substrate-binding positions include 60–62 and asparagine 92; that span reads HLR. Zn(2+) contacts are provided by aspartate 152, histidine 179, and histidine 232. Asparagine 278 provides a ligand contact to substrate. Residue aspartate 305 coordinates Zn(2+). Residue aspartate 305 is part of the active site. Substrate is bound by residues histidine 309 and 323–324; that span reads FG.

This sequence belongs to the metallo-dependent hydrolases superfamily. DHOase family. Class I DHOase subfamily. Requires Zn(2+) as cofactor.

It catalyses the reaction (S)-dihydroorotate + H2O = N-carbamoyl-L-aspartate + H(+). The protein operates within pyrimidine metabolism; UMP biosynthesis via de novo pathway; (S)-dihydroorotate from bicarbonate: step 3/3. Its function is as follows. Catalyzes the reversible cyclization of carbamoyl aspartate to dihydroorotate. In Leifsonia xyli subsp. xyli (strain CTCB07), this protein is Dihydroorotase.